The following is a 591-amino-acid chain: V-type ATP synthase alpha chain (591 aa).

242–249 (GPFGAGKT) contributes to the ATP binding site.

This sequence belongs to the ATPase alpha/beta chains family.

It catalyses the reaction ATP + H2O + 4 H(+)(in) = ADP + phosphate + 5 H(+)(out). In terms of biological role, produces ATP from ADP in the presence of a proton gradient across the membrane. The V-type alpha chain is a catalytic subunit. The protein is V-type ATP synthase alpha chain of Chlamydia abortus (strain DSM 27085 / S26/3) (Chlamydophila abortus).